The chain runs to 594 residues: Putative aldehyde oxidase Art an 7 (594 aa).

An N-terminal signal peptide occupies residues 1-23; that stretch reads MASSIKTVILFLLPLLLAYSVLA. The disordered stretch occupies residues 28-56; it reads TDGGDKPGPEIDDGGGDKPVPGNNDGASD.

In terms of processing, the N-terminus is blocked. Glycosylated. Expressed in pollen (at protein level).

It is found in the cytoplasm. It carries out the reaction an aldehyde + O2 + H2O = a carboxylate + H2O2 + H(+). Catalyzes the oxidation of aldehydes to the corresponding carboxylate by coupling the reaction to the reduction of dioxygen to hydrogen peroxide. Substrates include glyoxal and other aldehydes. Does not have enzymatic activity on D-galactose. The chain is Putative aldehyde oxidase Art an 7 from Artemisia annua (Sweet wormwood).